The following is a 409-amino-acid chain: Ubiquitin-associated domain-containing protein 1 (409 aa).

M1 bears the N-acetylmethionine mark. Positions 14–98 (LRLHICAADG…LLLIKKRVPS (85 aa)) constitute a Ubiquitin-like domain. Positions 101 to 122 (PKMADVSAEEKKKQEQKAPDKD) are disordered. Residues 108 to 122 (AEEKKKQEQKAPDKD) are compositionally biased toward basic and acidic residues. Residues 187–231 (DEDERVDETALRQLTEMGFPESRASKALRLNHMSVPQAMEWLIEH) enclose the UBA 1 domain. The interval 239-273 (TPLPGHAAQAGASAAATTSSTSSEAAVGTSVEDEE) is disordered. Residues 245–268 (AAQAGASAAATTSSTSSEAAVGTS) are compositionally biased toward low complexity. One can recognise a UBA 2 domain in the interval 292–332 (RADARAVISLMEMGFDEKEVIDALRVNNNQQNAACEWLLGD). In terms of domain architecture, STI1 spans 357-396 (NPVVQLGLTNPKTLLAFEDMLENPLNSTQWMNDPETGPVM).

Component of the KPC complex composed of RNF123/KPC1 and UBAC1/KPC2. Interacts (via ubiquitin-like domain) with RNF123. Interacts (via ubiquitin-like and UBA domains) with the proteasome via its N-terminal domain.

The protein resides in the cytoplasm. It participates in protein modification; protein ubiquitination. Its function is as follows. Non-catalytic component of the KPC complex, a E3 ubiquitin-protein ligase complex that mediates polyubiquitination of target proteins, such as CDKN1B and NFKB1. The KPC complex catalyzes polyubiquitination and proteasome-mediated degradation of CDKN1B during G1 phase of the cell cycle. The KPC complex also acts as a key regulator of the NF-kappa-B signaling by promoting maturation of the NFKB1 component of NF-kappa-B by catalyzing ubiquitination of the NFKB1 p105 precursor. Within the KPC complex, UBAC1 acts as an adapter that promotes the transfer of target proteins that have been polyubiquitinated by RNF123/KPC1 to the 26S proteasome. The sequence is that of Ubiquitin-associated domain-containing protein 1 (Ubac1) from Mus musculus (Mouse).